The following is a 390-amino-acid chain: Protein TAB2 homolog, chloroplastic (390 aa).

The N-terminal 69 residues, 1-69 (MTTATAIVAG…RSISSESSTE (69 aa)), are a transit peptide targeting the chloroplast. The tract at residues 16–85 (RRSLPLPNPP…IADEEVEAEN (70 aa)) is disordered. The span at 61-75 (SISSESSTEASAAAD) shows a compositional bias: low complexity.

The protein resides in the plastid. It localises to the chloroplast. Its function is as follows. Nuclear genome-encoded factor involved in the biogenesis of photosystem I (PSI). Required for the accumulation of PSI during plant development. Does not seem to be required for the translation of mRNAs of the PSI subunits. This Zea mays (Maize) protein is Protein TAB2 homolog, chloroplastic.